Here is a 389-residue protein sequence, read N- to C-terminus: Formate-dependent phosphoribosylglycinamide formyltransferase (389 aa).

Residues 15–16 (EL) and E75 each bind N(1)-(5-phospho-beta-D-ribosyl)glycinamide. Residues R107, K148, 153 to 158 (SSGKGQ), 188 to 191 (EEFL), and E196 contribute to the ATP site. The ATP-grasp domain occupies 112–302 (DLAAGELALR…EFELHLRAVL (191 aa)). The Mg(2+) site is built by E261 and E273. N(1)-(5-phospho-beta-D-ribosyl)glycinamide is bound by residues D280, K350, and 357–358 (RR).

Belongs to the PurK/PurT family. As to quaternary structure, homodimer.

It carries out the reaction N(1)-(5-phospho-beta-D-ribosyl)glycinamide + formate + ATP = N(2)-formyl-N(1)-(5-phospho-beta-D-ribosyl)glycinamide + ADP + phosphate + H(+). It participates in purine metabolism; IMP biosynthesis via de novo pathway; N(2)-formyl-N(1)-(5-phospho-D-ribosyl)glycinamide from N(1)-(5-phospho-D-ribosyl)glycinamide (formate route): step 1/1. Functionally, involved in the de novo purine biosynthesis. Catalyzes the transfer of formate to 5-phospho-ribosyl-glycinamide (GAR), producing 5-phospho-ribosyl-N-formylglycinamide (FGAR). Formate is provided by PurU via hydrolysis of 10-formyl-tetrahydrofolate. The chain is Formate-dependent phosphoribosylglycinamide formyltransferase from Synechococcus sp. (strain WH7803).